Consider the following 420-residue polypeptide: Glucose-1-phosphate adenylyltransferase (420 aa).

Alpha-D-glucose 1-phosphate contacts are provided by residues tyrosine 107, glycine 172, 187–188 (EK), and serine 205.

It belongs to the bacterial/plant glucose-1-phosphate adenylyltransferase family. As to quaternary structure, homotetramer.

It carries out the reaction alpha-D-glucose 1-phosphate + ATP + H(+) = ADP-alpha-D-glucose + diphosphate. The protein operates within glycan biosynthesis; glycogen biosynthesis. Functionally, involved in the biosynthesis of ADP-glucose, a building block required for the elongation reactions to produce glycogen. Catalyzes the reaction between ATP and alpha-D-glucose 1-phosphate (G1P) to produce pyrophosphate and ADP-Glc. The protein is Glucose-1-phosphate adenylyltransferase of Agrobacterium fabrum (strain C58 / ATCC 33970) (Agrobacterium tumefaciens (strain C58)).